We begin with the raw amino-acid sequence, 370 residues long: GTPase Obg (370 aa).

Residues 1 to 159 form the Obg domain; that stretch reads MKFIDEARIE…RMLRLELKVL (159 aa). Positions 160–334 constitute an OBG-type G domain; it reads ADVGLLGMPN…LCYAIYDYLA (175 aa). GTP-binding positions include 166-173, 191-195, 213-216, 284-287, and 315-317; these read GMPNAGKS, FTTLA, DIPG, NKLD, and SAL. Mg(2+)-binding residues include Ser-173 and Thr-193. Residues 344–370 are disordered; that stretch reads EEEDLATDVRFRDAPPADGGATPGGDA.

This sequence belongs to the TRAFAC class OBG-HflX-like GTPase superfamily. OBG GTPase family. Monomer. The cofactor is Mg(2+).

It is found in the cytoplasm. In terms of biological role, an essential GTPase which binds GTP, GDP and possibly (p)ppGpp with moderate affinity, with high nucleotide exchange rates and a fairly low GTP hydrolysis rate. Plays a role in control of the cell cycle, stress response, ribosome biogenesis and in those bacteria that undergo differentiation, in morphogenesis control. This chain is GTPase Obg, found in Burkholderia ambifaria (strain MC40-6).